The chain runs to 56 residues: Large ribosomal subunit protein bL32 (56 aa).

Over residues 1-20 (MAVPKRRTSRSNTRSRRAQW) the composition is skewed to basic residues. The disordered stretch occupies residues 1–26 (MAVPKRRTSRSNTRSRRAQWKAKAPA).

This sequence belongs to the bacterial ribosomal protein bL32 family.

The protein is Large ribosomal subunit protein bL32 of Parafrankia sp. (strain EAN1pec).